We begin with the raw amino-acid sequence, 247 residues long: ATP synthase subunit a, plastid (247 aa).

Transmembrane regions (helical) follow at residues 33–53, 95–115, 134–154, 199–219, and 220–240; these read FLVH…LLGS, VPFI…GALL, INTT…AGIL, LVVV…VMLL, and GLFT…AYIG.

It belongs to the ATPase A chain family. F-type ATPases have 2 components, CF(1) - the catalytic core - and CF(0) - the membrane proton channel. CF(1) has five subunits: alpha(3), beta(3), gamma(1), delta(1), epsilon(1). CF(0) has four main subunits: a, b, b' and c.

The protein localises to the plastid membrane. Its function is as follows. Key component of the proton channel; it plays a direct role in the translocation of protons across the membrane. This is ATP synthase subunit a, plastid from Cuscuta exaltata (Tall dodder).